We begin with the raw amino-acid sequence, 494 residues long: MSREQIIKDGGNILVTAGAGSGKTTILVSKIEADLKENKTHYSIAAVTFTNKAAKEIEGRLGYSSRGNFIGTNDGFVESEIIRPFIKDAFGNDYPDNFTAEYFDNQFASYDKGLQVLKYQNILGTYSNPKKNFKFQLALDILKKSLVARQYIFSKYFKIFIDEYQDSDKDMHNLFMYLKDQLKIKLFIVGDPKQSIYIWRGAEPENFNGLIENSTDFNKYHLTSNFRCCQDIQNYSNLFNEETRSLIKEKNEVQNVISIADDMPISDILLKLTEEKQVLNIEAELVILVRRRNQAIEIMKELNEEGFNFIFIPQTPLDRATPNATLLKEVIKYVKNDRYSIYDLAAEIVGNLSSREIKEIQKIINELLVPNINQVLINQVLINLFAKLEITLDTREITAFTEVMMTNEFDIAFDTNEYLHKIFTVHSAKGLEFNQVIITASDYNVHYNRDTNEHYVATTRAKDKLIVIMDNKKYSDYIETLMKELKIKNIIKSI.

The 229-residue stretch at Met-1 to Cys-229 folds into the UvrD-like helicase ATP-binding domain. Ala-17–Thr-24 serves as a coordination point for ATP.

This sequence belongs to the helicase family. Homodimer. Interacts with GajA; 2 GajB dimers dock at opposite sides of the GajA complex to form a 4:4 GajA-GajB assembly (GajAB). GajAB interacts with Bacillus phage Phi3T Gad1 protein; this interaction forms a 4:4:8 GajAB-Gad1 complex and leads to GajAB inhibition.

Its function is as follows. Component of antiviral defense system Gabija type I, composed of GajA and GajB. Expression of Gabija type I in B.subtilis (strain BEST7003) confers resistance to phages phi105, phi29, rho14, SpBeta and SBSphiC. Expression of Gabija type I in E.coli B (strain ATCC 11303) confers resistance to phage T7. May be a helicase or contribute to GajA activation. This is Gabija protein GajB from Bacillus cereus (strain VD045).